Reading from the N-terminus, the 485-residue chain is Probable RNA-binding protein 46 (485 aa).

RRM domains are found at residues 61–139, 141–223, and 236–308; these read CEVF…VSLD, CRLF…WADP, and KVLY…LAKP.

As to quaternary structure, interacts with YTHDC2, MEIOC, MOV10, CNOT6L, DDX4, UPF1 and PABPC1.

It is found in the cytoplasm. In terms of biological role, essential for male and female fertility, playing a crucial role in regulating germ cell development by ensuring the proper progression of meiosis prophase I. Regulates mitotic-to-meiotic transition in spermatogenesis by forming a complex with MEIOC and YTHDC2 which recognizes and down-regulates mitotic transcripts for a successful meiotic entry. Required for normal synaptonemal complex formation during meiosis, binding meiotic cohesin subunit mRNAs containing GCCUAU/GUUCGA motifs in their 3'UTRs regions and positively regulating their translation. Required for spermatogonial differentiation in both developing and adult testis. The polypeptide is Probable RNA-binding protein 46 (RBM46) (Macaca fascicularis (Crab-eating macaque)).